The following is a 218-amino-acid chain: Adenylate kinase (218 aa).

10 to 15 (GAGKGT) is a binding site for ATP. An NMP region spans residues 30–59 (STGDMIRETIKSGSVLGQELKKVLDAGELV). Residues T31, R36, 57-59 (ELV), and Q92 each bind AMP. Residues 122-159 (GRRIHPASGRTYHTKFNPPKVADKDDVTGEPLITRTDD) are LID. Residues R123 and 132–133 (TY) each bind ATP. The AMP site is built by R156 and R167. Q202 provides a ligand contact to ATP.

This sequence belongs to the adenylate kinase family. Monomer.

It localises to the cytoplasm. The catalysed reaction is AMP + ATP = 2 ADP. It participates in purine metabolism; AMP biosynthesis via salvage pathway; AMP from ADP: step 1/1. Catalyzes the reversible transfer of the terminal phosphate group between ATP and AMP. Plays an important role in cellular energy homeostasis and in adenine nucleotide metabolism. This chain is Adenylate kinase, found in Francisella tularensis subsp. holarctica (strain LVS).